A 314-amino-acid polypeptide reads, in one-letter code: Acetyl-coenzyme A carboxylase carboxyl transferase subunit alpha (314 aa).

The 258-residue stretch at 32 to 289 (EIDMLEASLE…KSAFVAQLDS (258 aa)) folds into the CoA carboxyltransferase C-terminal domain.

This sequence belongs to the AccA family. In terms of assembly, acetyl-CoA carboxylase is a heterohexamer composed of biotin carboxyl carrier protein (AccB), biotin carboxylase (AccC) and two subunits each of ACCase subunit alpha (AccA) and ACCase subunit beta (AccD).

The protein resides in the cytoplasm. It catalyses the reaction N(6)-carboxybiotinyl-L-lysyl-[protein] + acetyl-CoA = N(6)-biotinyl-L-lysyl-[protein] + malonyl-CoA. It participates in lipid metabolism; malonyl-CoA biosynthesis; malonyl-CoA from acetyl-CoA: step 1/1. In terms of biological role, component of the acetyl coenzyme A carboxylase (ACC) complex. First, biotin carboxylase catalyzes the carboxylation of biotin on its carrier protein (BCCP) and then the CO(2) group is transferred by the carboxyltransferase to acetyl-CoA to form malonyl-CoA. The sequence is that of Acetyl-coenzyme A carboxylase carboxyl transferase subunit alpha from Staphylococcus aureus (strain NCTC 8325 / PS 47).